A 123-amino-acid chain; its full sequence is UPF0212 protein rrnAC0441 (123 aa).

Belongs to the UPF0212 family.

This chain is UPF0212 protein rrnAC0441, found in Haloarcula marismortui (strain ATCC 43049 / DSM 3752 / JCM 8966 / VKM B-1809) (Halobacterium marismortui).